We begin with the raw amino-acid sequence, 152 residues long: Synaptobrevin (152 aa).

Over residues 1-16 (MENNEAPSPSGSNNND) the composition is skewed to polar residues. Residues 1 to 30 (MENNEAPSPSGSNNNDFPILPPPPNANDNY) are disordered. Topologically, residues 1–110 (MENNEAPSPS…KRKQWWANMK (110 aa)) are cytoplasmic. One can recognise a v-SNARE coiled-coil homology domain in the interval 47-107 (KLQQTQAKVD…GKLKRKQWWA (61 aa)). A helical; Anchor for type IV membrane protein transmembrane segment spans residues 111 to 130 (MMIILGVIAVVLLIIVLVSV). The Vesicular portion of the chain corresponds to 131-152 (WPSSSDSGSGGGNKAITQAPPH). A disordered region spans residues 133–152 (SSSDSGSGGGNKAITQAPPH).

It belongs to the synaptobrevin family. In terms of assembly, part of the SNARE core complex containing Snap25 and syntaxin. Post-translationally, ubiquitinated by gzl, regulating endocytic trafficking. In wing imaginal disks, ubiquitination by gzl promotes transcytosis of wingless (wg) to the basolateral surface. Not nervous system-specific; abundant in cells of the gut and Malpighian tubules.

It localises to the cytoplasmic vesicle. It is found in the secretory vesicle. The protein resides in the synaptic vesicle membrane. Its subcellular location is the cell membrane. Involved in the targeting and/or fusion of transport vesicles to their target membrane. This Drosophila melanogaster (Fruit fly) protein is Synaptobrevin.